The chain runs to 87 residues: NADH dehydrogenase [ubiquinone] 1 alpha subcomplex subunit 4-like 2 (87 aa).

Belongs to the complex I NDUFA4 subunit family.

The chain is NADH dehydrogenase [ubiquinone] 1 alpha subcomplex subunit 4-like 2 (NDUFA4L2) from Homo sapiens (Human).